Reading from the N-terminus, the 262-residue chain is Acyl-[acyl-carrier-protein]--UDP-N-acetylglucosamine O-acyltransferase (262 aa).

Belongs to the transferase hexapeptide repeat family. LpxA subfamily. Homotrimer.

It is found in the cytoplasm. It carries out the reaction a (3R)-hydroxyacyl-[ACP] + UDP-N-acetyl-alpha-D-glucosamine = a UDP-3-O-[(3R)-3-hydroxyacyl]-N-acetyl-alpha-D-glucosamine + holo-[ACP]. Its pathway is glycolipid biosynthesis; lipid IV(A) biosynthesis; lipid IV(A) from (3R)-3-hydroxytetradecanoyl-[acyl-carrier-protein] and UDP-N-acetyl-alpha-D-glucosamine: step 1/6. Involved in the biosynthesis of lipid A, a phosphorylated glycolipid that anchors the lipopolysaccharide to the outer membrane of the cell. This Salmonella heidelberg (strain SL476) protein is Acyl-[acyl-carrier-protein]--UDP-N-acetylglucosamine O-acyltransferase.